We begin with the raw amino-acid sequence, 807 residues long: Probable phosphoketolase (807 aa).

This sequence belongs to the XFP family. Thiamine diphosphate is required as a cofactor.

This chain is Probable phosphoketolase, found in Nitrosospira multiformis (strain ATCC 25196 / NCIMB 11849 / C 71).